The chain runs to 565 residues: Sodium/hydrogen exchanger 9B1 (565 aa).

2 stretches are compositionally biased toward basic and acidic residues: residues 1–14 (MSEH…KDDG) and 23–86 (MSKD…ETQT). Positions 1–112 (MSEHDVESNK…RGTNSYCPPQ (112 aa)) are disordered. 13 helical membrane-spanning segments follow: residues 122 to 142 (GAAL…EVLP), 146 to 166 (LFGL…LEFI), 167 to 187 (KIPV…GFTI), 206 to 223 (ALRN…GLGL), 238 to 258 (LSFG…HFIM), 266 to 286 (FLLG…NMLM), 311 to 331 (IVAI…GSVI), 341 to 361 (VLIG…FPSG), 371 to 391 (AFLV…IGLH), 419 to 439 (IVAN…GTEV), 449 to 469 (IGMC…STFV), 482 to 502 (VFIA…GPLA), and 523 to 543 (VAFL…GILG).

The protein belongs to the monovalent cation:proton antiporter 1 (CPA1) transporter (TC 2.A.36) family. Testis-specific. Expressed in the spermatids and spermatozoa (at protein level). Specifically present in the principal piece of sperm tail (at protein level).

The protein localises to the cell projection. It is found in the cilium. The protein resides in the flagellum membrane. Sperm-specific Na(+)/H(+) exchanger involved in intracellular pH regulation of spermatozoa. Involved in sperm motility and fertility. This is Sodium/hydrogen exchanger 9B1 from Mus musculus (Mouse).